A 499-amino-acid chain; its full sequence is Alpha-L-arabinofuranosidase B (499 aa).

A signal peptide spans 1-17 (MFSRRNLLALGLAATVS). Positions 18–335 (AGPCDIYEAG…ENIVAAKYVV (318 aa)) are catalytic. Disulfide bonds link Cys-21–Cys-31, Cys-81–Cys-86, and Cys-176–Cys-177. Asn-83 is a glycosylation site (N-linked (GlcNAc...) asparagine). N-linked (GlcNAc...) asparagine glycosylation occurs at Asn-202. Asp-219 is a binding site for substrate. Catalysis depends on Glu-221, which acts as the Nucleophile. Residues Asn-222, Asn-223, and Gly-296 each contribute to the substrate site. Catalysis depends on Asp-297, which acts as the Proton donor. Residues 336–499 (GSLVSGPSFT…SFEIETAFAS (164 aa)) form an ABD region. Cysteines 401 and 439 form a disulfide. Substrate is bound by residues His-416, Asn-418, Phe-419, Asp-435, His-463, Glu-465, Leu-468, and Asp-488.

It belongs to the glycosyl hydrolase 54 family.

It localises to the secreted. It carries out the reaction Hydrolysis of terminal non-reducing alpha-L-arabinofuranoside residues in alpha-L-arabinosides.. The protein operates within glycan metabolism; L-arabinan degradation. In terms of biological role, alpha-L-arabinofuranosidase involved in the degradation of arabinoxylan, a major component of plant hemicellulose. Able to hydrolyze 1,5-, 1,3- and 1,2-alpha-linkages not only in L-arabinofuranosyl oligosaccharides, but also in polysaccharides containing terminal non-reducing L-arabinofuranoses in side chains, like L-arabinan, arabinogalactan and arabinoxylan. The protein is Alpha-L-arabinofuranosidase B (abfB) of Aspergillus kawachii (strain NBRC 4308) (White koji mold).